The sequence spans 235 residues: MIDILPAFWAVIPAAGVGARMAADRPKQYLELAGQTLLEHSLDCFLGHPALKGVVVSIAEDDPYWPGLRCASDPRIHCAAGGRERADSVLNALLVLHAQGAADSDWVLVHDAARPNLARSDLDKLLSELADDPVGGLLAVPARDTLKRADSHGRVSATVDRSTIWQAYTPQMFRLGALHRALAECLVSDVVVTDEASAIEWSGQAPRLVEGRSDNIKVTRPEDLEWLRQRWAGKR.

The protein belongs to the IspD/TarI cytidylyltransferase family. IspD subfamily.

The enzyme catalyses 2-C-methyl-D-erythritol 4-phosphate + CTP + H(+) = 4-CDP-2-C-methyl-D-erythritol + diphosphate. Its pathway is isoprenoid biosynthesis; isopentenyl diphosphate biosynthesis via DXP pathway; isopentenyl diphosphate from 1-deoxy-D-xylulose 5-phosphate: step 2/6. In terms of biological role, catalyzes the formation of 4-diphosphocytidyl-2-C-methyl-D-erythritol from CTP and 2-C-methyl-D-erythritol 4-phosphate (MEP). This Pseudomonas putida (strain ATCC 47054 / DSM 6125 / CFBP 8728 / NCIMB 11950 / KT2440) protein is 2-C-methyl-D-erythritol 4-phosphate cytidylyltransferase.